Consider the following 161-residue polypeptide: NADH-quinone oxidoreductase subunit I (161 aa).

4Fe-4S ferredoxin-type domains lie at Leu52–Glu82 and Lys92–Val121. Positions 62, 65, 68, 72, 101, 104, 107, and 111 each coordinate [4Fe-4S] cluster.

Belongs to the complex I 23 kDa subunit family. As to quaternary structure, NDH-1 is composed of 14 different subunits. Subunits NuoA, H, J, K, L, M, N constitute the membrane sector of the complex. [4Fe-4S] cluster is required as a cofactor.

It is found in the cell inner membrane. It catalyses the reaction a quinone + NADH + 5 H(+)(in) = a quinol + NAD(+) + 4 H(+)(out). Functionally, NDH-1 shuttles electrons from NADH, via FMN and iron-sulfur (Fe-S) centers, to quinones in the respiratory chain. The immediate electron acceptor for the enzyme in this species is believed to be ubiquinone. Couples the redox reaction to proton translocation (for every two electrons transferred, four hydrogen ions are translocated across the cytoplasmic membrane), and thus conserves the redox energy in a proton gradient. The sequence is that of NADH-quinone oxidoreductase subunit I from Aromatoleum aromaticum (strain DSM 19018 / LMG 30748 / EbN1) (Azoarcus sp. (strain EbN1)).